Consider the following 233-residue polypeptide: Octanoyltransferase (233 aa).

In terms of domain architecture, BPL/LPL catalytic spans 36–211 (DTTPDEIWLV…EFTRQLGYPT (176 aa)). Residues 75–82 (RGGQVTYH), 142–144 (SLG), and 155–157 (GLA) each bind substrate. Cysteine 173 functions as the Acyl-thioester intermediate in the catalytic mechanism.

Belongs to the LipB family.

It is found in the cytoplasm. It carries out the reaction octanoyl-[ACP] + L-lysyl-[protein] = N(6)-octanoyl-L-lysyl-[protein] + holo-[ACP] + H(+). Its pathway is protein modification; protein lipoylation via endogenous pathway; protein N(6)-(lipoyl)lysine from octanoyl-[acyl-carrier-protein]: step 1/2. Functionally, catalyzes the transfer of endogenously produced octanoic acid from octanoyl-acyl-carrier-protein onto the lipoyl domains of lipoate-dependent enzymes. Lipoyl-ACP can also act as a substrate although octanoyl-ACP is likely to be the physiological substrate. This chain is Octanoyltransferase, found in Yersinia pestis bv. Antiqua (strain Antiqua).